Reading from the N-terminus, the 321-residue chain is MARHKIALIGSGMIGGTLAHLVGLKELGDVVLFDIAEGIPQGKGLDIAESAPVEGFDAKFLGTNDYAAIEGADVCIVTAGVPRKPGMSRDDLLGINLKVMEQVGAGIKKYAPNAFVICITNPLDAMVWALQKFSGLPKSHVVGMAGVLDSARFRYFLAEEFKVSVEDVTGFVLGGHGDSMVPLIRYSTVAGIPIPDLVKMGWTTQEKIDQIVQRTRDGGAEIVGLLKSGSAFYAPASSAIAMAEAYLKDKKRVLPCAAHVSGQYGVKDLYVGVPTVIGAGGVERIIEIDLNKTEQKMFENSVASVEGLCKACGDIAPSLKN.

NAD(+)-binding positions include 10 to 15 and aspartate 34; that span reads GSGMIG. 2 residues coordinate substrate: arginine 83 and arginine 89. NAD(+) contacts are provided by residues asparagine 96 and 119-121; that span reads ITN. Residues asparagine 121 and arginine 152 each coordinate substrate. Catalysis depends on histidine 176, which acts as the Proton acceptor.

It belongs to the LDH/MDH superfamily. MDH type 3 family.

The catalysed reaction is (S)-malate + NAD(+) = oxaloacetate + NADH + H(+). Catalyzes the reversible oxidation of malate to oxaloacetate. The chain is Malate dehydrogenase from Chelativorans sp. (strain BNC1).